The chain runs to 165 residues: Cytochrome c-type biogenesis protein CcmE (165 aa).

Over 1–29 the chain is Cytoplasmic; that stretch reads MSATAEQNARNPKGKGGFARTVSQRKRKR. A helical; Signal-anchor for type II membrane protein transmembrane segment spans residues 30-50; it reads LFLIGGALAVLAVAVGLMLTA. The Periplasmic segment spans residues 51–165; the sequence is FNQDIRFFRT…LKKKGVWEGK (115 aa). Heme-binding residues include histidine 143 and tyrosine 147.

This sequence belongs to the CcmE/CycJ family.

The protein localises to the cell inner membrane. In terms of biological role, heme chaperone required for the biogenesis of c-type cytochromes. Transiently binds heme delivered by CcmC and transfers the heme to apo-cytochromes in a process facilitated by CcmF and CcmH. This is Cytochrome c-type biogenesis protein CcmE from Brucella abortus (strain S19).